The chain runs to 120 residues: Large ribosomal subunit protein uL18 (120 aa).

The protein belongs to the universal ribosomal protein uL18 family. In terms of assembly, part of the 50S ribosomal subunit; part of the 5S rRNA/L5/L18/L25 subcomplex. Contacts the 5S and 23S rRNAs.

This is one of the proteins that bind and probably mediate the attachment of the 5S RNA into the large ribosomal subunit, where it forms part of the central protuberance. The sequence is that of Large ribosomal subunit protein uL18 from Rhizobium meliloti (strain 1021) (Ensifer meliloti).